We begin with the raw amino-acid sequence, 513 residues long: ATP synthase subunit alpha (513 aa).

An ATP-binding site is contributed by Gly169–Thr176.

The protein belongs to the ATPase alpha/beta chains family. As to quaternary structure, F-type ATPases have 2 components, CF(1) - the catalytic core - and CF(0) - the membrane proton channel. CF(1) has five subunits: alpha(3), beta(3), gamma(1), delta(1), epsilon(1). CF(0) has three main subunits: a(1), b(2) and c(9-12). The alpha and beta chains form an alternating ring which encloses part of the gamma chain. CF(1) is attached to CF(0) by a central stalk formed by the gamma and epsilon chains, while a peripheral stalk is formed by the delta and b chains.

The protein resides in the cell inner membrane. The catalysed reaction is ATP + H2O + 4 H(+)(in) = ADP + phosphate + 5 H(+)(out). Produces ATP from ADP in the presence of a proton gradient across the membrane. The alpha chain is a regulatory subunit. This chain is ATP synthase subunit alpha, found in Thioalkalivibrio sulfidiphilus (strain HL-EbGR7).